The chain runs to 430 residues: Glutamate-1-semialdehyde 2,1-aminomutase (430 aa).

Lys-265 is modified (N6-(pyridoxal phosphate)lysine).

The protein belongs to the class-III pyridoxal-phosphate-dependent aminotransferase family. HemL subfamily. The cofactor is pyridoxal 5'-phosphate.

The protein localises to the cytoplasm. The enzyme catalyses (S)-4-amino-5-oxopentanoate = 5-aminolevulinate. It participates in porphyrin-containing compound metabolism; protoporphyrin-IX biosynthesis; 5-aminolevulinate from L-glutamyl-tRNA(Glu): step 2/2. The protein is Glutamate-1-semialdehyde 2,1-aminomutase of Caldivirga maquilingensis (strain ATCC 700844 / DSM 13496 / JCM 10307 / IC-167).